Consider the following 230-residue polypeptide: Ribonuclease 1 (230 aa).

Positions 1 to 22 (MKILLASLCLISLLVILPSVFS) are cleaved as a signal peptide. Residue glutamine 38 participates in RNA binding. Cysteine 44 and cysteine 50 are oxidised to a cystine. Residues histidine 65, phenylalanine 115, 118 to 119 (HE), and 122 to 123 (KH) contribute to the RNA site. Catalysis depends on histidine 65, which acts as the Proton donor. Disulfide bonds link cysteine 80-cysteine 126, cysteine 186-cysteine 221, and cysteine 202-cysteine 213. Glutamate 119 is a catalytic residue. Catalysis depends on histidine 123, which acts as the Proton acceptor.

Belongs to the RNase T2 family.

It catalyses the reaction a ribonucleotidyl-ribonucleotide-RNA + H2O = a 3'-end 3'-phospho-ribonucleotide-RNA + a 5'-end dephospho-ribonucleoside-RNA + H(+). In terms of biological role, may remobilize phosphate, particularly when cells senesce or when phosphate becomes limiting. The chain is Ribonuclease 1 (RNS1) from Arabidopsis thaliana (Mouse-ear cress).